Reading from the N-terminus, the 79-residue chain is Raniseptin-3 (79 aa).

The signal sequence occupies residues 1-22 (MAFLKKSLFLVLFLGIVSLSIC). Residues 23-49 (EEEKREGEEEEKQEEENEELSEEELRE) constitute a propeptide that is removed on maturation.

It belongs to the frog skin active peptide (FSAP) family. Dermaseptin subfamily. In terms of tissue distribution, expressed by the skin glands.

It localises to the secreted. In terms of biological role, has antibacterial activity. This chain is Raniseptin-3, found in Boana raniceps (Chaco tree frog).